Consider the following 798-residue polypeptide: Acetamidase regulatory protein (798 aa).

Positions 20 to 50 form a DNA-binding region, zn(2)-C6 fungal-type; that stretch reads CVHCHRRKVRCDARLVGLPCSNCRSAGKTDC. Disordered stretches follow at residues 68 to 96, 115 to 172, and 632 to 714; these read VPIR…PPNA, ANRV…ESRA, and LRTT…TLSA. Low complexity-rich tracts occupy residues 82-94 and 133-147; these read KPIS…SEPP and TRSN…QYQN. The segment covering 632–641 has biased composition (basic and acidic residues); it reads LRTTTSDRPR. The span at 644-663 shows a compositional bias: polar residues; it reads SNLSNNSTNSPASQQKNTSG. Over residues 678 to 687 the composition is skewed to pro residues; the sequence is PSAPSIPPLQ.

It localises to the nucleus. Its function is as follows. Positively regulates the expression of 5 genes involved in the catabolism of certain amides (amdS), omega amino acids (gatA and gabA), and lactams (lamA and lamB) in the presence of omega amino acid inducers. This chain is Acetamidase regulatory protein (amdR), found in Emericella nidulans (strain FGSC A4 / ATCC 38163 / CBS 112.46 / NRRL 194 / M139) (Aspergillus nidulans).